The following is a 536-amino-acid chain: Sensory rhodopsin I transducer (536 aa).

The Cytoplasmic segment spans residues 2-14 (TIAWARRRYGVKL). Residues 15–29 (GLGYIATAGLLVGVG) traverse the membrane as a helical segment. Residues 30–39 (VTTNDVPSTI) are Extracellular-facing. A helical transmembrane segment spans residues 40–55 (VAGIAGLLTLGSINAA). Residues 55–107 (AETVASIKEIAAQTERVANGNLEQEVTSTRTDEFGSLADSIEQMRQSLRGRLN) enclose the HAMP 1 domain. Topologically, residues 56–536 (ETVASIKEIA…MRAGADGGGA (481 aa)) are cytoplasmic. The tract at residues 116–145 (LEETQAEAETAREEAEQAKQEAQAAEREAR) is disordered. Residues 124-145 (ETAREEAEQAKQEAQAAEREAR) show a composition bias toward basic and acidic residues. The HAMP 2 domain maps to 149–202 (ATYQDTAKRYGETMEAAATGDLTQRVDVDTDHEAMETVGTAFNQMMDDLQATVR). Residues 221–459 (TSADIEASAG…STATSVERVA (239 aa)) form the Methyl-accepting transducer domain. Glu266 is subject to Glutamate methyl ester (Glu). The disordered stretch occupies residues 278–307 (SEDVATASDAARDSSKSALDEMSSIETEVD). A compositionally biased stretch (basic and acidic residues) spans 287-296 (AARDSSKSAL). The residue at position 473 (Glu473) is a Glutamate methyl ester (Glu). The tract at residues 512 to 536 (TEDSETAGGSVEQPVMRAGADGGGA) is disordered.

This sequence belongs to the methyl-accepting chemotaxis (MCP) protein family. In terms of processing, methylated by CheR.

It localises to the cell membrane. Its function is as follows. Transduces signals from the phototaxis receptor sensory rhodopsin I (SR-I) to the flagellar motor. Responds to light changes through the variation of the level of methylation. The chain is Sensory rhodopsin I transducer (htr1) from Halobacterium salinarum (strain ATCC 29341 / DSM 671 / R1).